We begin with the raw amino-acid sequence, 545 residues long: Eukaryotic translation initiation factor 3 subunit D-2 (545 aa).

Positions Phe-99 to Thr-113 are enriched in basic residues. The segment at Phe-99 to Arg-158 is disordered. Over residues Gly-114–Pro-127 the composition is skewed to gly residues. The segment covering Glu-133–Arg-145 has biased composition (basic and acidic residues). The interval Gln-287 to Pro-301 is RNA gate.

It belongs to the eIF-3 subunit D family. In terms of assembly, component of the eukaryotic translation initiation factor 3 (eIF-3) complex. The eIF-3 complex interacts with pix.

It is found in the cytoplasm. Its function is as follows. mRNA cap-binding component of the eukaryotic translation initiation factor 3 (eIF-3) complex, which is involved in protein synthesis of a specialized repertoire of mRNAs and, together with other initiation factors, stimulates binding of mRNA and methionyl-tRNAi to the 40S ribosome. The eIF-3 complex specifically targets and initiates translation of a subset of mRNAs involved in cell proliferation. In the eIF-3 complex, eif3d specifically recognizes and binds the 7-methylguanosine cap of a subset of mRNAs. The sequence is that of Eukaryotic translation initiation factor 3 subunit D-2 from Drosophila persimilis (Fruit fly).